The chain runs to 298 residues: tRNA dimethylallyltransferase (298 aa).

ATP is bound at residue 16 to 23; sequence GPTASGKS. A substrate-binding site is contributed by 18–23; it reads TASGKS. 2 interaction with substrate tRNA regions span residues 41-44 and 165-169; these read DSMQ and QRIVR.

Belongs to the IPP transferase family. Monomer. Mg(2+) serves as cofactor.

It catalyses the reaction adenosine(37) in tRNA + dimethylallyl diphosphate = N(6)-dimethylallyladenosine(37) in tRNA + diphosphate. Its function is as follows. Catalyzes the transfer of a dimethylallyl group onto the adenine at position 37 in tRNAs that read codons beginning with uridine, leading to the formation of N6-(dimethylallyl)adenosine (i(6)A). The polypeptide is tRNA dimethylallyltransferase (Rhizobium rhizogenes (strain K84 / ATCC BAA-868) (Agrobacterium radiobacter)).